We begin with the raw amino-acid sequence, 127 residues long: uncharacterized protein (127 aa).

Over residues 1–13 the composition is skewed to polar residues; that stretch reads MEAGNRSGTPQHR. Residues 1 to 26 form a disordered region; sequence MEAGNRSGTPQHRQLSEIRQDLSSSP.

This is an uncharacterized protein from Saccharomyces cerevisiae (strain ATCC 204508 / S288c) (Baker's yeast).